A 308-amino-acid polypeptide reads, in one-letter code: MTSKLEQLKKITTVVADTGDFDAIARVKPVDATTNPSLLLKAAAIPGYADLLNACVNDCKGDVGLASDRFGVAVGQEILKVIPGRISTEVDARLSFDTEAMLKRAHRLIELYDKAGIGRDRVLIKIASTWEGIRAAEKLEREGIQTNLTLLFSFAQAVACAEAGVFLISPFVGRIYDWYKKATGNDYQGADDPGVQSVTRIYNYYKANDYKTVVMGASFRNLNQIEQLAGCDRLTISPDLIEKLAADTGKLERKLSPGKTGEARQSLNEAQFRWASNEDAMATEKLAEGIRQFARDQEKLEALLAAKL.

Lys-125 serves as the catalytic Schiff-base intermediate with substrate.

The protein belongs to the transaldolase family. Type 1 subfamily. In terms of assembly, homodimer.

It localises to the cytoplasm. It carries out the reaction D-sedoheptulose 7-phosphate + D-glyceraldehyde 3-phosphate = D-erythrose 4-phosphate + beta-D-fructose 6-phosphate. Its pathway is carbohydrate degradation; pentose phosphate pathway; D-glyceraldehyde 3-phosphate and beta-D-fructose 6-phosphate from D-ribose 5-phosphate and D-xylulose 5-phosphate (non-oxidative stage): step 2/3. Its function is as follows. Transaldolase is important for the balance of metabolites in the pentose-phosphate pathway. The chain is Transaldolase from Pseudomonas fluorescens (strain ATCC BAA-477 / NRRL B-23932 / Pf-5).